The chain runs to 464 residues: Aspartyl protease 37 (464 aa).

The N-terminal stretch at 1–19 (MNAAVLLLLLALAALPASC) is a signal peptide. N-linked (GlcNAc...) asparagine glycosylation is present at N41. Positions 89–456 (YLVKLGIGTP…NLRRGRVTFV (368 aa)) constitute a Peptidase A1 domain. The active site involves D107. A disulfide bridge links C117 with C123. 2 N-linked (GlcNAc...) asparagine glycosylation sites follow: N174 and N261. Positions 299 to 311 (TTTTTATATATAP) are enriched in low complexity. Positions 299 to 319 (TTTTTATATATAPAPAPTPSP) are disordered. An N-linked (GlcNAc...) asparagine glycan is attached at N320. The active site involves D337. Cysteines 376 and 420 form a disulfide.

The protein belongs to the peptidase A1 family.

Functionally, anther-specific aspartic protease involved in tapetal programmed cell death (PCD). Directly regulated by the transcription factor EAT1/DTD in anthers during tapetum PCD and degeneration. The protein is Aspartyl protease 37 of Oryza sativa subsp. japonica (Rice).